We begin with the raw amino-acid sequence, 165 residues long: Regulator of ribonuclease activity A (165 aa).

The protein belongs to the RraA family. In terms of assembly, homotrimer. Binds to both RNA-binding sites in the C-terminal region of Rne and to RhlB.

The protein resides in the cytoplasm. Globally modulates RNA abundance by binding to RNase E (Rne) and regulating its endonucleolytic activity. Can modulate Rne action in a substrate-dependent manner by altering the composition of the degradosome. Modulates RNA-binding and helicase activities of the degradosome. The polypeptide is Regulator of ribonuclease activity A (Actinobacillus pleuropneumoniae serotype 5b (strain L20)).